A 775-amino-acid polypeptide reads, in one-letter code: Putative late blight resistance protein homolog R1A-3 (775 aa).

Residues 16–39 adopt a coiled-coil conformation; that stretch reads PRMNEEIVGFEDVIENLRKKLLSE. One can recognise an NB-ARC domain in the interval 17 to 237; it reads RMNEEIVGFE…LSEMEKEVEC (221 aa). 50-57 lines the ATP pocket; sequence GMPGLGKT. The 65-residue stretch at 711–775 folds into the HMA domain; that stretch reads IKKMILQFDI…VGKLIDSGML (65 aa).

This sequence belongs to the disease resistance NB-LRR family.

The protein localises to the cytoplasm. Its subcellular location is the membrane. Functionally, confers resistance to late blight (Phytophthora infestans) races carrying the avirulence gene Avr1. Resistance proteins guard the plant against pathogens that contain an appropriate avirulence protein via an indirect interaction with this avirulence protein. That triggers a defense system including the hypersensitive response, which restricts the pathogen growth. This Solanum demissum (Wild potato) protein is Putative late blight resistance protein homolog R1A-3 (R1A-3).